The sequence spans 373 residues: P2Y purinoceptor 2 (373 aa).

Over 1–32 the chain is Extracellular; that stretch reads MAADLEPWNSTINGTWEGDELGYKCRFNEDFK. 2 N-linked (GlcNAc...) asparagine glycosylation sites follow: Asn-9 and Asn-13. A helical transmembrane segment spans residues 33–59; it reads YVLLPVSYGVVCVLGLCLNVVALYIFL. The Cytoplasmic segment spans residues 60 to 70; sequence CRLKTWNASTT. The chain crosses the membrane as a helical span at residues 71-93; sequence YMFHLAVSDSLYAASLPLLVYYY. At 94-110 the chain is on the extracellular side; the sequence is ARGDHWPFSTVLCKLVR. Residues Cys-106 and Cys-183 are joined by a disulfide bond. Residues 111–129 form a helical membrane-spanning segment; it reads FLFYTNLYCSILFLTCISV. At 130–152 the chain is on the cytoplasmic side; the sequence is HRCLGVLRPLHSLRWGRARYARR. Residues 153 to 172 form a helical membrane-spanning segment; it reads VAAVVWVLVLACQAPVLYFV. Residues 173-194 lie on the Extracellular side of the membrane; that stretch reads TTSVRGTRITCHDTSARELFSH. The helical transmembrane segment at 195 to 220 threads the bilayer; it reads FVAYSSVMLGLLFAVPFSVILVCYVL. Over 221–246 the chain is Cytoplasmic; sequence MARRLLKPAYGTTGGLPRAKRKSVRT. The helical transmembrane segment at 247–269 threads the bilayer; it reads IALVLAVFALCFLPFHVTRTLYY. Over 270–287 the chain is Extracellular; sequence SFRSLDLSCHTLNAINMA. The chain crosses the membrane as a helical span at residues 288 to 309; it reads YKITRPLASANSCLDPVLYFLA. Residues 310–373 lie on the Cytoplasmic side of the membrane; sequence GQRLVRFARD…AGSETKDIRL (64 aa). A disordered region spans residues 318 to 373; sequence RDAKPPTEPTPSPQARRKLGLHRPNRTVRKDLSVSSDDSRRTESTPAGSETKDIRL. Residues 332–344 are compositionally biased toward basic residues; sequence ARRKLGLHRPNRT. The span at 345 to 360 shows a compositional bias: basic and acidic residues; that stretch reads VRKDLSVSSDDSRRTE.

The protein belongs to the G-protein coupled receptor 1 family. In terms of tissue distribution, spleen, testis, kidney, liver, lung, heart and brain.

It is found in the cell membrane. Functionally, receptor for ATP and UTP coupled to G-proteins that activate a phosphatidylinositol-calcium second messenger system. The affinity range is UTP = ATP &gt; ATP-gamma-S &gt;&gt; 2-methylthio-ATP = ADP. This is P2Y purinoceptor 2 (P2ry2) from Mus musculus (Mouse).